A 579-amino-acid polypeptide reads, in one-letter code: Rop guanine nucleotide exchange factor 6 (579 aa).

Low complexity predominate over residues 31 to 61 (ESTTDSSLSSSSSGVGSSSGRSSVAERSVSS). Residues 31 to 89 (ESTTDSSLSSSSSGVGSSSGRSSVAERSVSSPPTKSQILGWPLGQGSWRKSSGKMKKKT) form a disordered region. One can recognise a PRONE domain in the interval 98–479 (FKRVGTETSE…DISKDDGDGD (382 aa)).

Functionally, guanine-nucleotide exchange factor (GEF) that acts as an activator of Rop (Rho of plants) GTPases by promoting the exchange of GDP for GTP. This Arabidopsis thaliana (Mouse-ear cress) protein is Rop guanine nucleotide exchange factor 6 (ROPGEF6).